The sequence spans 401 residues: Phosphoglycerate kinase (401 aa).

Substrate contacts are provided by residues 24-26 (DFN), Arg-40, 63-66 (HFGR), Arg-122, and Arg-155. Residues Lys-206, Gly-297, Glu-328, and 357–360 (GGDS) each bind ATP.

Belongs to the phosphoglycerate kinase family. As to quaternary structure, monomer.

Its subcellular location is the cytoplasm. The catalysed reaction is (2R)-3-phosphoglycerate + ATP = (2R)-3-phospho-glyceroyl phosphate + ADP. Its pathway is carbohydrate degradation; glycolysis; pyruvate from D-glyceraldehyde 3-phosphate: step 2/5. The protein is Phosphoglycerate kinase of Synechococcus sp. (strain CC9605).